The following is a 588-amino-acid chain: Adenine deaminase (588 aa).

It belongs to the metallo-dependent hydrolases superfamily. Adenine deaminase family. Homodimer. It depends on Mn(2+) as a cofactor.

The catalysed reaction is adenine + H2O + H(+) = hypoxanthine + NH4(+). The protein is Adenine deaminase of Escherichia fergusonii (strain ATCC 35469 / DSM 13698 / CCUG 18766 / IAM 14443 / JCM 21226 / LMG 7866 / NBRC 102419 / NCTC 12128 / CDC 0568-73).